A 1940-amino-acid chain; its full sequence is Myosin-3 (1940 aa).

Positions 33 to 82 (DAKTYCFVVDSKEEYAKGKIKSSQDGKVTVETEDNRTLVVKPEDVYAMNP) constitute a Myosin N-terminal SH3-like domain. Residues 86–779 (DKIEDMAMLT…LLGTLEEMRD (694 aa)) form the Myosin motor domain. Position 130 is an N6,N6,N6-trimethyllysine (K130). 179–186 (GESGAGKT) contacts ATP. Actin-binding regions lie at residues 656-678 (LNKLMSNLRTTHPHFVRCIIPNE) and 758-772 (KFGHTKVFFKAGLLG). Residues 782-811 (LAKLITRTQAVCRGFLMRVEFQKMMQRRES) form the IQ domain. A coiled-coil region spans residues 840 to 1933 (LLKSAETEKE…KTRDFTSSRM (1094 aa)). A disordered region spans residues 1260 to 1289 (ARGKNEETQRSLSELTTQKSRLQTEAGELS). Positions 1269-1282 (RSLSELTTQKSRLQ) are enriched in polar residues.

It belongs to the TRAFAC class myosin-kinesin ATPase superfamily. Myosin family. In terms of assembly, muscle myosin is a hexameric protein that consists of 2 heavy chain subunits (MHC), 2 alkali light chain subunits (MLC) and 2 regulatory light chain subunits (MLC-2).

Its subcellular location is the cytoplasm. The protein resides in the myofibril. Its function is as follows. Muscle contraction. The chain is Myosin-3 (Myh3) from Rattus norvegicus (Rat).